Reading from the N-terminus, the 299-residue chain is Probable lipid kinase YegS (299 aa).

Residues 2 to 133 form the DAGKc domain; sequence ANFPASLLIL…IDMAMVNDKT (132 aa). Residues Thr40, 66–72, and Thr95 contribute to the ATP site; that span reads GDGTINE. Mg(2+) is bound by residues Leu215, Asp218, and Leu220. Glu271 serves as the catalytic Proton acceptor.

This sequence belongs to the diacylglycerol/lipid kinase family. YegS lipid kinase subfamily. Mg(2+) is required as a cofactor. Ca(2+) serves as cofactor.

It localises to the cytoplasm. Functionally, probably phosphorylates lipids; the in vivo substrate is unknown. This chain is Probable lipid kinase YegS, found in Salmonella choleraesuis (strain SC-B67).